We begin with the raw amino-acid sequence, 264 residues long: Indole-3-glycerol phosphate synthase (264 aa).

It belongs to the TrpC family.

It carries out the reaction 1-(2-carboxyphenylamino)-1-deoxy-D-ribulose 5-phosphate + H(+) = (1S,2R)-1-C-(indol-3-yl)glycerol 3-phosphate + CO2 + H2O. Its pathway is amino-acid biosynthesis; L-tryptophan biosynthesis; L-tryptophan from chorismate: step 4/5. The chain is Indole-3-glycerol phosphate synthase from Xylella fastidiosa (strain 9a5c).